A 193-amino-acid polypeptide reads, in one-letter code: MFSEELKAFRRLGIRHLLLQALNFASVIASGLMMWKGLGVITNTESPIVVVLSGSMEPAFYRGDLLFLTNPSGVRFHTGDITVYKVPNGDIPIVHRVLETHEIAPNATFVPHKYNRAYTPEDQLLLTKGDNNPIDDTGLYTQGMDWLERKHIVGKVRGFVPYVGYATIAMNDFPQLKYGLLGILGLMALIQRE.

The Cytoplasmic portion of the chain corresponds to Met1–His16. The helical; Signal-anchor for type II membrane protein transmembrane segment at Leu17–Ile41 threads the bilayer. The Lumenal portion of the chain corresponds to Thr42–Glu193. Active-site charge relay system residues include Ser55 and His95. Asn106 carries N-linked (GlcNAc...) asparagine glycosylation. Asp136 acts as the Charge relay system in catalysis. Residues Gly179–Ile190 are C-terminal short (CTS) helix.

The protein belongs to the peptidase S26B family. In terms of assembly, component of the signal peptidase complex (SPC) composed of a catalytic subunit SEC11 and three accessory subunits SPC1, SPC2 and SPC3. The complex induces a local thinning of the ER membrane which is used to measure the length of the signal peptide (SP) h-region of protein substrates. This ensures the selectivity of the complex towards h-regions shorter than 18-20 amino acids. SPC associates with the translocon complex.

It is found in the endoplasmic reticulum membrane. It carries out the reaction Cleavage of hydrophobic, N-terminal signal or leader sequences from secreted and periplasmic proteins.. Functionally, catalytic component of the signal peptidase complex (SPC) which catalyzes the cleavage of N-terminal signal sequences from nascent proteins as they are translocated into the lumen of the endoplasmic reticulum. Specifically cleaves N-terminal signal peptides that contain a hydrophobic alpha-helix (h-region) shorter than 18-20 amino acids. The polypeptide is Signal peptidase complex catalytic subunit SEC11 (SEC11) (Schizophyllum commune (strain H4-8 / FGSC 9210) (Split gill fungus)).